We begin with the raw amino-acid sequence, 256 residues long: Small ribosomal subunit protein eS1 (256 aa).

Residues 1–18 are compositionally biased toward basic residues; sequence MAVGKNKRLSKGKKGLKK. The disordered stretch occupies residues 1-22; that stretch reads MAVGKNKRLSKGKKGLKKKTQD. Alanine 2 carries the post-translational modification N-acetylalanine; partial.

The protein belongs to the eukaryotic ribosomal protein eS1 family. As to quaternary structure, component of the small ribosomal subunit. Mature ribosomes consist of a small (40S) and a large (60S) subunit. The 40S subunit contains about 33 different proteins and 1 molecule of RNA (18S). The 60S subunit contains about 49 different proteins and 3 molecules of RNA (25S, 5.8S and 5S).

Its subcellular location is the cytoplasm. This chain is Small ribosomal subunit protein eS1, found in Pyricularia oryzae (strain Y34) (Rice blast fungus).